Here is a 204-residue protein sequence, read N- to C-terminus: MAQYTKAMGTVRKYTPATLKRDGKPAFVYVYRHLQTGQVAYTQVPGVTEHHLNRQFKDPNWENKRPTMRQDLWRPMAVADFGDHQAACDAYDGLVYLRYKRTHDGKKDIKGWRKTNAAGNVWQDGQYRPVYTQEALADLSTVTEAVKVPVTIHWEDLWRRGAAESWPENADHSVLKRWDAIYPQSLEKRLAKEAKVPGETTAEQ.

It belongs to the mitochondrion-specific ribosomal protein mL67 family.

It is found in the nucleus. The protein localises to the mitochondrion. Transcription factor involved in regulation of RNA polymerase II-dependent transcription. Also involved in regulation of mitochondrial DNA recombination, maintenance and repair, and generation of homoplasmic cells. This Yarrowia lipolytica (strain CLIB 122 / E 150) (Yeast) protein is Large ribosomal subunit protein mL67 (MHR1).